The chain runs to 245 residues: Flavin mononucleotide hydrolase 1, chloroplatic (245 aa).

The transit peptide at M1–R26 directs the protein to the chloroplast.

The protein belongs to the HAD-like hydrolase superfamily. DOG/GPP family. Homodimer. Mg(2+) is required as a cofactor.

The protein localises to the plastid. Its subcellular location is the chloroplast stroma. The enzyme catalyses FMN + H2O = riboflavin + phosphate. It catalyses the reaction 5-amino-6-(5-phospho-D-ribitylamino)uracil + H2O = 5-amino-6-(D-ribitylamino)uracil + phosphate. FMN hydrolase that catalyzes the dephosphorylation of flavin mononucleotide (FMN) to riboflavin. Can also dephosphorylate 5-amino-6-(5-phospho-D-ribitylamino)uracil, also known as ARPP. Not required for riboflavin biosynthesis in planta, but may help maintaining flavin homeostasis within chloroplasts. This chain is Flavin mononucleotide hydrolase 1, chloroplatic, found in Arabidopsis thaliana (Mouse-ear cress).